The primary structure comprises 201 residues: uncharacterized protein (201 aa).

This is an uncharacterized protein from Bacillus subtilis (strain 168).